The chain runs to 146 residues: Hut operon positive regulatory protein (146 aa).

This sequence belongs to the HutP family. In terms of assembly, homohexamer.

Its function is as follows. Antiterminator that binds to cis-acting regulatory sequences on the mRNA in the presence of histidine, thereby suppressing transcription termination and activating the hut operon for histidine utilization. In Bacillus anthracis (strain CDC 684 / NRRL 3495), this protein is Hut operon positive regulatory protein.